We begin with the raw amino-acid sequence, 258 residues long: MKKMPMRKRFGQHFLHDSFVLQKIVSAIHPQKTDTLVEIGPGRGALTDYLLTECDNLALVEIDRDLVAFLQKKYNQQKNITIYQNDALQFDFSSVKTDKPLRVVGNLPYNISTPLLFHLFSQIHCIEDMHFMLQKEVVRRITAEVGSHDYGRLSVMAKYFCDNTYLFTVSPQAFTPPPRVESAIIRLIPRHNFTPVAKNLDQLSHVVKEAFSYRRKTVGNALKKLINPSQWPLLEINPQLRPQELTVEDFVKISNILN.

Residues His13, Leu15, Gly40, Glu61, Asp86, and Asn106 each coordinate S-adenosyl-L-methionine.

Belongs to the class I-like SAM-binding methyltransferase superfamily. rRNA adenine N(6)-methyltransferase family. RsmA subfamily.

The protein localises to the cytoplasm. The catalysed reaction is adenosine(1518)/adenosine(1519) in 16S rRNA + 4 S-adenosyl-L-methionine = N(6)-dimethyladenosine(1518)/N(6)-dimethyladenosine(1519) in 16S rRNA + 4 S-adenosyl-L-homocysteine + 4 H(+). Its function is as follows. Specifically dimethylates two adjacent adenosines (A1518 and A1519) in the loop of a conserved hairpin near the 3'-end of 16S rRNA in the 30S particle. May play a critical role in biogenesis of 30S subunits. The polypeptide is Ribosomal RNA small subunit methyltransferase A (Coxiella burnetii (strain RSA 331 / Henzerling II)).